The following is a 193-amino-acid chain: dCTP deaminase (193 aa).

DCTP contacts are provided by residues 110-115, Asp-128, 136-138, Tyr-171, Lys-178, and Gln-182; these read RSSLAR and VLE. The active-site Proton donor/acceptor is Glu-138. Residues 169 to 193 are disordered; sequence RPYNRREDAKYRNQQGAVASRIDKD.

It belongs to the dCTP deaminase family. In terms of assembly, homotrimer.

The enzyme catalyses dCTP + H2O + H(+) = dUTP + NH4(+). It functions in the pathway pyrimidine metabolism; dUMP biosynthesis; dUMP from dCTP (dUTP route): step 1/2. In terms of biological role, catalyzes the deamination of dCTP to dUTP. In Escherichia coli O1:K1 / APEC, this protein is dCTP deaminase.